A 263-amino-acid chain; its full sequence is Probable ABC transporter permease protein ycf63 (263 aa).

6 helical membrane-spanning segments follow: residues 43-63, 82-102, 136-156, 159-179, 199-219, and 230-250; these read LVGP…SMVF, AVIV…VIIA, LVFP…TISL, SIAI…SIFL, LCFG…SSGG, and SVVT…YFMF.

Belongs to the MlaE permease family.

The protein localises to the plastid. The protein resides in the chloroplast membrane. Functionally, could be part of an ABC transporter complex. The polypeptide is Probable ABC transporter permease protein ycf63 (ycf63) (Porphyra purpurea (Red seaweed)).